Consider the following 474-residue polypeptide: Probable dipeptidase B (474 aa).

Cysteine 11 is an active-site residue.

The protein belongs to the peptidase C69 family.

The catalysed reaction is an L-aminoacyl-L-amino acid + H2O = 2 an L-alpha-amino acid. The polypeptide is Probable dipeptidase B (pepDB) (Lactococcus lactis subsp. lactis (strain IL1403) (Streptococcus lactis)).